Here is a 108-residue protein sequence, read N- to C-terminus: ATP-dependent Clp protease adapter protein ClpS (108 aa).

The segment covering 1–15 (MPRESSPDSHHEHGV) has biased composition (basic and acidic residues). Residues 1-24 (MPRESSPDSHHEHGVAVEPARPEV) form a disordered region.

Belongs to the ClpS family. As to quaternary structure, binds to the N-terminal domain of the chaperone ClpA.

In terms of biological role, involved in the modulation of the specificity of the ClpAP-mediated ATP-dependent protein degradation. The chain is ATP-dependent Clp protease adapter protein ClpS from Stenotrophomonas maltophilia (strain R551-3).